Consider the following 188-residue polypeptide: Peptidyl-tRNA hydrolase (188 aa).

Position 14 (Y14) interacts with tRNA. Residue H19 is the Proton acceptor of the active site. TRNA-binding residues include Y60 and N62.

Belongs to the PTH family. Monomer.

The protein localises to the cytoplasm. It catalyses the reaction an N-acyl-L-alpha-aminoacyl-tRNA + H2O = an N-acyl-L-amino acid + a tRNA + H(+). In terms of biological role, hydrolyzes ribosome-free peptidyl-tRNAs (with 1 or more amino acids incorporated), which drop off the ribosome during protein synthesis, or as a result of ribosome stalling. Catalyzes the release of premature peptidyl moieties from peptidyl-tRNA molecules trapped in stalled 50S ribosomal subunits, and thus maintains levels of free tRNAs and 50S ribosomes. The chain is Peptidyl-tRNA hydrolase from Mycoplasmopsis agalactiae (strain NCTC 10123 / CIP 59.7 / PG2) (Mycoplasma agalactiae).